An 88-amino-acid polypeptide reads, in one-letter code: Histone H2A-beta, sperm (88 aa).

Belongs to the histone H2A family. The nucleosome is a histone octamer containing two molecules each of H2A, H2B, H3 and H4 assembled in one H3-H4 heterotetramer and two H2A-H2B heterodimers. The octamer wraps approximately 147 bp of DNA. Monoubiquitination in C-terminus gives a specific tag for epigenetic transcriptional repression.

The protein localises to the nucleus. Its subcellular location is the chromosome. Functionally, core component of nucleosome. Nucleosomes wrap and compact DNA into chromatin, limiting DNA accessibility to the cellular machineries which require DNA as a template. Histones thereby play a central role in transcription regulation, DNA repair, DNA replication and chromosomal stability. DNA accessibility is regulated via a complex set of post-translational modifications of histones, also called histone code, and nucleosome remodeling. The sequence is that of Histone H2A-beta, sperm from Strongylocentrotus purpuratus (Purple sea urchin).